We begin with the raw amino-acid sequence, 190 residues long: MKSTLRPALVLFAVLTLICGVIYPYAITGIGKLAFSEQAEGSLVSRNGQIVGSSLIGQAFSSPQYFWGRPSATSPMPNNAAASSGSNQGPLNLALIDSVKGRIAALKAADPANTLPVPVDLVTASASGLDPEISLAAAKYQAARIALARKMQLEEVQSIIDRHSKAQYFGFFGEPRVNVLALNLALDQHH.

The helical transmembrane segment at 10 to 30 (VLFAVLTLICGVIYPYAITGI) threads the bilayer.

It belongs to the KdpC family. In terms of assembly, the system is composed of three essential subunits: KdpA, KdpB and KdpC.

The protein localises to the cell inner membrane. Functionally, part of the high-affinity ATP-driven potassium transport (or Kdp) system, which catalyzes the hydrolysis of ATP coupled with the electrogenic transport of potassium into the cytoplasm. This subunit acts as a catalytic chaperone that increases the ATP-binding affinity of the ATP-hydrolyzing subunit KdpB by the formation of a transient KdpB/KdpC/ATP ternary complex. The sequence is that of Potassium-transporting ATPase KdpC subunit from Herminiimonas arsenicoxydans.